A 163-amino-acid chain; its full sequence is Nucleotide-binding protein KPN78578_03700 (163 aa).

Belongs to the YajQ family.

In terms of biological role, nucleotide-binding protein. The polypeptide is Nucleotide-binding protein KPN78578_03700 (Klebsiella pneumoniae subsp. pneumoniae (strain ATCC 700721 / MGH 78578)).